A 210-amino-acid chain; its full sequence is MKTVLLTGFEPFGGETVNPSWEAARQLDGETIAGARVHARLLPCEFGAALDELYRQLDALRPDVAIAVGQAGGRPDIAVERVAINVDDARFPDNAGRQPIDEPVVANGPAAYFATLPIKAIVAGLRERGLPATVSQSAGTFVCNHVMYGLLHRGGPRAGFIHLPFLPEQAIRHPGAFSLKLDDCVAALRLAVELSLTRGKDEKREGGTIH.

Active-site residues include Glu-80, Cys-143, and His-162.

It belongs to the peptidase C15 family. In terms of assembly, homotetramer.

It is found in the cytoplasm. It catalyses the reaction Release of an N-terminal pyroglutamyl group from a polypeptide, the second amino acid generally not being Pro.. Its function is as follows. Removes 5-oxoproline from various penultimate amino acid residues except L-proline. The chain is Pyrrolidone-carboxylate peptidase from Chromobacterium violaceum (strain ATCC 12472 / DSM 30191 / JCM 1249 / CCUG 213 / NBRC 12614 / NCIMB 9131 / NCTC 9757 / MK).